The chain runs to 637 residues: MSVRRTRKDDGSQWTVADSRSVYGIRHWGAGYFAINEAGRVEVRPNGPQSAPIDLFEQVDELRQSGLSLPLLVRFPDILQDRVRQLTGAFDANIARLEYQSQYTALYPIKVNQQEAVVENIIATQNVSIGLEAGSKPELLAVLALAPKGGTIVCNGYKDREFIRLALMGQKLGHNVFIVIEKESEVALVIEEAAELKVKPQVGLRVRLSSLASSKWADTGGEKSKFGLSAAQLLSVVQRFRDAGLDQGIRLLHFHMGSQIANLADYQHGFKEAIRYYGELRALGLPVDHIDVGGGLGVDYDGTHSRNASSINYDMDDYAGVVVGMLKEFCDAQGLPHPHIFSESGRSLTAHHAMLVIQVTDVEKHNDDVPTIENKEALPETVQWLVDLLGPTDIEMVTETYWRATHYMGDVAAQYADGKLSLGEKALAEQCYFAVCRRLHNSLKARQRSHRQVLDELNDKLADKYICNFSVFQSLPDTWAIGQVLPIIPLHRLDEEPMRRAVLQDLTCDSDGKINQYVDEQSIETSMPVHAVKEGEDYLLGVFLVGAYQEILGDMHNLFGDTDSVNIYQNADGSVYHAGIETHDTIEDMLRYVHLSPEELMTHYRDKVASAKITARERTQYLDALRLGLTRSSYLSS.

Lys-110 carries the post-translational modification N6-(pyridoxal phosphate)lysine. A substrate-binding site is contributed by 290-300 (IDVGGGLGVDY).

This sequence belongs to the Orn/Lys/Arg decarboxylase class-II family. SpeA subfamily. It depends on Mg(2+) as a cofactor. Pyridoxal 5'-phosphate serves as cofactor.

The enzyme catalyses L-arginine + H(+) = agmatine + CO2. Catalyzes the biosynthesis of agmatine from arginine. The chain is Biosynthetic arginine decarboxylase from Pseudomonas putida (strain ATCC 47054 / DSM 6125 / CFBP 8728 / NCIMB 11950 / KT2440).